Reading from the N-terminus, the 692-residue chain is Elongation factor G (692 aa).

One can recognise a tr-type G domain in the interval 8–282; sequence ENTRNIGIMA…AVIDYLPSPL (275 aa). Residues 17-24, 81-85, and 135-138 contribute to the GTP site; these read AHIDAGKT, DTPGH, and NKMD.

The protein belongs to the TRAFAC class translation factor GTPase superfamily. Classic translation factor GTPase family. EF-G/EF-2 subfamily.

Its subcellular location is the cytoplasm. Catalyzes the GTP-dependent ribosomal translocation step during translation elongation. During this step, the ribosome changes from the pre-translocational (PRE) to the post-translocational (POST) state as the newly formed A-site-bound peptidyl-tRNA and P-site-bound deacylated tRNA move to the P and E sites, respectively. Catalyzes the coordinated movement of the two tRNA molecules, the mRNA and conformational changes in the ribosome. This Bacillus mycoides (strain KBAB4) (Bacillus weihenstephanensis) protein is Elongation factor G.